Consider the following 364-residue polypeptide: Fructose-bisphosphate aldolase B (364 aa).

Ala2 is subject to N-acetylalanine. At Lys13 the chain carries N6-succinyllysine. At Ser36 the chain carries Phosphoserine. A Phosphothreonine modification is found at Thr39. Residue Arg43 coordinates beta-D-fructose 1,6-bisphosphate. Position 89 is a phosphoserine (Ser89). Residue Thr119 is modified to Phosphothreonine. The residue at position 121 (Lys121) is an N6-succinyllysine. Ser132 is modified (phosphoserine). The active-site Proton acceptor is the Glu188. Position 206 is a phosphoserine (Ser206). Catalysis depends on Lys230, which acts as the Schiff-base intermediate with dihydroxyacetone-P. Phosphoserine is present on residues Ser272, Ser276, Ser299, and Ser301. Residue 272–274 (SGG) coordinates beta-D-fructose 1,6-bisphosphate. Beta-D-fructose 1,6-bisphosphate is bound at residue Arg304. Position 309 is a phosphoserine (Ser309). N6-succinyllysine is present on Lys317.

This sequence belongs to the class I fructose-bisphosphate aldolase family. In terms of assembly, homotetramer. Interacts with BBS1, BBS2, BBS4 and BBS7. Forms a ternary complex with G6PD and TP53; this interaction is direct.

The protein localises to the cytoplasm. The protein resides in the cytosol. It is found in the cytoskeleton. Its subcellular location is the microtubule organizing center. It localises to the centrosome. The protein localises to the centriolar satellite. The catalysed reaction is beta-D-fructose 1,6-bisphosphate = D-glyceraldehyde 3-phosphate + dihydroxyacetone phosphate. It catalyses the reaction beta-D-fructose 1-phosphate = D-glyceraldehyde + dihydroxyacetone phosphate. The protein operates within carbohydrate degradation; glycolysis; D-glyceraldehyde 3-phosphate and glycerone phosphate from D-glucose: step 4/4. Its pathway is carbohydrate biosynthesis; gluconeogenesis. It participates in carbohydrate metabolism; fructose metabolism. Functionally, catalyzes the aldol cleavage of fructose 1,6-biphosphate to form two triosephosphates dihydroxyacetone phosphate and D-glyceraldehyde 3-phosphate in glycolysis as well as the reverse stereospecific aldol addition reaction in gluconeogenesis. In fructolysis, metabolizes fructose 1-phosphate derived from the phosphorylation of dietary fructose by fructokinase into dihydroxyacetone phosphate and D-glyceraldehyde. Acts as an adapter independently of its enzymatic activity, exerts a tumor suppressor role by stabilizing the ternary complex with G6PD and TP53 to inhibit G6PD activity and keep oxidative pentose phosphate metabolism in check. The protein is Fructose-bisphosphate aldolase B of Mus musculus (Mouse).